The sequence spans 396 residues: Flavohemoprotein (396 aa).

The 136-residue stretch at 1–136 (MLDAQTIATV…LANVFIHREA (136 aa)) folds into the Globin domain. Heme b is bound at residue histidine 85. Active-site charge relay system residues include tyrosine 95 and glutamate 135. The reductase stretch occupies residues 147 to 396 (GGWEGTRPFR…YECFGPHKVL (250 aa)). One can recognise an FAD-binding FR-type domain in the interval 150 to 255 (EGTRPFRIVA…AAPAGDFFMN (106 aa)). Residues tyrosine 188 and 204–207 (RQYS) each bind FAD. 268 to 273 (GVGQTP) lines the NADP(+) pocket. 389–392 (CFGP) is an FAD binding site.

It belongs to the globin family. Two-domain flavohemoproteins subfamily. This sequence in the C-terminal section; belongs to the flavoprotein pyridine nucleotide cytochrome reductase family. The cofactor is heme b. It depends on FAD as a cofactor.

It carries out the reaction 2 nitric oxide + NADPH + 2 O2 = 2 nitrate + NADP(+) + H(+). It catalyses the reaction 2 nitric oxide + NADH + 2 O2 = 2 nitrate + NAD(+) + H(+). Functionally, is involved in NO detoxification in an aerobic process, termed nitric oxide dioxygenase (NOD) reaction that utilizes O(2) and NAD(P)H to convert NO to nitrate, which protects the bacterium from various noxious nitrogen compounds. Therefore, plays a central role in the inducible response to nitrosative stress. This chain is Flavohemoprotein, found in Salmonella typhi.